Here is a 181-residue protein sequence, read N- to C-terminus: Protein Syd (181 aa).

Belongs to the Syd family.

Its subcellular location is the cell inner membrane. Interacts with the SecY protein in vivo. May bind preferentially to an uncomplexed state of SecY, thus functioning either as a chelating agent for excess SecY in the cell or as a regulatory factor that negatively controls the translocase function. The chain is Protein Syd from Klebsiella pneumoniae (strain 342).